The following is a 362-amino-acid chain: Myricetin 3'-O-methyltransferase 4 (362 aa).

S-adenosyl-L-methionine is bound at residue D229. H267 serves as the catalytic Proton acceptor.

This sequence belongs to the class I-like SAM-binding methyltransferase superfamily. Cation-independent O-methyltransferase family. As to quaternary structure, homodimer. As to expression, mainly expressed in stem and petiole trichomes.

The enzyme catalyses myricetin + S-adenosyl-L-methionine = laricitrin + S-adenosyl-L-homocysteine + H(+). It functions in the pathway flavonoid metabolism. In terms of biological role, flavonoid 3'-O-methyltransferase involved in the biosynthesis of polymethoxylated flavonoids natural products such as myricetin derivatives, aroma compounds possessing antioxidant properties and exhibiting pharmacological activities such as anti-carcinogen, anti-viral, anti-thrombotic, anti-diabetic, anti-atherosclerotic, and anti-inflammatory effects. Catalyzes S-adenosylmethionine-dependent regioselective 3'-O-methylation of flavonoids; active on various hydroxylated flavonoid substrates, including myricetin, thus producing 3'-methyl myricetin (laricitrin). This chain is Myricetin 3'-O-methyltransferase 4, found in Solanum lycopersicum (Tomato).